A 210-amino-acid polypeptide reads, in one-letter code: Large ribosomal subunit protein bL25 (210 aa).

A disordered region spans residues 185–210 (APEPAGQPEVPPEPAEEAKAKTIEKE). The span at 200-210 (EEAKAKTIEKE) shows a compositional bias: basic and acidic residues.

Belongs to the bacterial ribosomal protein bL25 family. CTC subfamily. Part of the 50S ribosomal subunit; part of the 5S rRNA/L5/L18/L25 subcomplex. Contacts the 5S rRNA. Binds to the 5S rRNA independently of L5 and L18.

In terms of biological role, this is one of the proteins that binds to the 5S RNA in the ribosome where it forms part of the central protuberance. This Desulforamulus reducens (strain ATCC BAA-1160 / DSM 100696 / MI-1) (Desulfotomaculum reducens) protein is Large ribosomal subunit protein bL25.